A 105-amino-acid chain; its full sequence is Large ribosomal subunit protein eL36 (105 aa).

It belongs to the eukaryotic ribosomal protein eL36 family. As to quaternary structure, component of the large ribosomal subunit.

It localises to the cytoplasm. Its subcellular location is the cytosol. Its function is as follows. Component of the large ribosomal subunit. The ribosome is a large ribonucleoprotein complex responsible for the synthesis of proteins in the cell. The sequence is that of Large ribosomal subunit protein eL36 (rpl36) from Danio rerio (Zebrafish).